The following is a 368-amino-acid chain: Endophilin-A2 (368 aa).

Residues 1 to 21 (MSVAGLKKQFYKASQLVSEKV) form a membrane-binding amphipathic helix region. A BAR domain is found at 18 to 249 (SEKVGGAEGT…LKRRVREASS (232 aa)). Positions 60 to 87 (PNPASRAKLTMLNTVSKIRGQVKNPGYP) are required for dimerization upon membrane association. A coiled-coil region spans residues 180 to 250 (DEELRQALEK…KRRVREASSR (71 aa)). An interaction with ARC region spans residues 218 to 254 (LVDAQLDYHRQAVQILEELADKLKRRVREASSRPRRE). The disordered stretch occupies residues 243–309 (RVREASSRPR…SKSMPPLDQP (67 aa)). The span at 245–261 (REASSRPRREFKPRPQE) shows a compositional bias: basic and acidic residues. The residue at position 288 (Ser-288) is a Phosphoserine. Phosphothreonine is present on Thr-298. The SH3 domain occupies 306 to 365 (LDQPSCKALYDFEPENDGELGFREGDLITLTNQIDENWYEGMLHGQSGFFPLSYVQVLVP). Tyr-315 is subject to Phosphotyrosine.

Belongs to the endophilin family. As to quaternary structure, interacts with ARC, SYNJ1 and DNM1. Interacts with PDCD6IP. Interacts with BIN2. Detected in brain and testis (at protein level). Ubiquitous.

The protein resides in the cytoplasm. Its subcellular location is the early endosome membrane. The protein localises to the cell projection. It localises to the podosome. Its function is as follows. Implicated in endocytosis. May recruit other proteins to membranes with high curvature. This chain is Endophilin-A2 (Sh3gl1), found in Rattus norvegicus (Rat).